An 885-amino-acid polypeptide reads, in one-letter code: Translation initiation factor IF-2 (885 aa).

2 disordered regions span residues 135 to 159 (KAKAEAEAKAKAEAEAKAKAKAAAE) and 184 to 289 (QAEA…PESM). The span at 184-232 (QAEATKRKQDEEAAKAAEKARLLAEENSKRWAEEERQRLEAERYSDHHI) shows a compositional bias: basic and acidic residues. Residues 253–266 (GRRARNKNTAKSKR) show a composition bias toward basic residues. The segment covering 267–276 (GGKDARDGRE) has biased composition (basic and acidic residues). The region spanning 385-554 (PRAPVVTIMG…LLQAEVLELK (170 aa)) is the tr-type G domain. The segment at 394–401 (GHVDHGKT) is G1. 394–401 (GHVDHGKT) is a binding site for GTP. The segment at 419-423 (GITQH) is G2. The segment at 440–443 (DTPG) is G3. GTP contacts are provided by residues 440-444 (DTPGH) and 494-497 (NKMD). The segment at 494–497 (NKMD) is G4. The tract at residues 530–532 (SAK) is G5.

It belongs to the TRAFAC class translation factor GTPase superfamily. Classic translation factor GTPase family. IF-2 subfamily.

The protein resides in the cytoplasm. In terms of biological role, one of the essential components for the initiation of protein synthesis. Protects formylmethionyl-tRNA from spontaneous hydrolysis and promotes its binding to the 30S ribosomal subunits. Also involved in the hydrolysis of GTP during the formation of the 70S ribosomal complex. The protein is Translation initiation factor IF-2 of Shewanella sp. (strain MR-7).